A 498-amino-acid polypeptide reads, in one-letter code: Pyridine nucleotide-disulfide oxidoreductase domain-containing protein 1 (498 aa).

Position 1 is an N-acetylmethionine (M1).

Belongs to the class-I pyridine nucleotide-disulfide oxidoreductase family. PYROXD1 subfamily. It depends on FAD as a cofactor.

The protein localises to the nucleus. It localises to the cytoplasm. The protein resides in the myofibril. Its subcellular location is the sarcomere. In terms of biological role, probable FAD-dependent oxidoreductase; involved in the cellular oxidative stress response. Required for normal sarcomere structure and muscle fiber integrity. The sequence is that of Pyridine nucleotide-disulfide oxidoreductase domain-containing protein 1 (Pyroxd1) from Mus musculus (Mouse).